Consider the following 409-residue polypeptide: POU domain, class 4, transcription factor 2 (409 aa).

Residues 26–93 (YSALHSTSPG…SEAMRRACLP (68 aa)) are disordered. The segment covering 31–52 (STSPGSSAPIAPSASSPSSSSN) has biased composition (low complexity). Residues 53 to 69 (AGGGGGGGGGGGGGGGR) show a composition bias toward gly residues. The required for transcriptional activation stretch occupies residues 91-237 (CLPTPPSNIF…MHQAALSMAH (147 aa)). Positions 110–119 (RAEALAAVDI) match the POU-IV box motif. The segment covering 153–166 (AASSSSVPISHPSA) has biased composition (low complexity). The disordered stretch occupies residues 153 to 188 (AASSSSVPISHPSALAGTHHHHHHHHHHHHQPHQAL). A compositionally biased stretch (basic residues) spans 170–184 (THHHHHHHHHHHHQP). The Nuclear speckle targeting signal signature appears at 171–185 (HHHHHHHHHHHHQPH). Positions 238-409 (AHGLPSHMGC…QKRMKYSAGI (172 aa)) are required for DNA-binding and transcriptional repression. Residues 250-327 (DVDADPRDLE…ILQAWLEEAE (78 aa)) form the POU-specific domain. Positions 345-404 (KKRKRTSIAAPEKRSLEAYFAIQPRPSSEKIAAIAEKLDLKKNVVRVWFCNQRQKQKRMK) form a DNA-binding region, homeobox.

It belongs to the POU transcription factor family. Class-4 subfamily. In terms of assembly, interacts with POU4F1; this interaction inhibits both POU4F1 DNA-binding and transcriptional activities. Interacts (C-terminus) with ESR1 (via DNA-binding domain); this interaction increases the estrogen receptor ESR1 transcriptional activity in a DNA- and ligand 17-beta-estradiol-independent manner. Interacts (via C-terminus) with TP53 (via N-terminus). Interacts with DLX1 (via homeobox DNA-binding domain); this interaction suppresses DLX1-mediated transcriptional activity in postnatal retina enhancing retinal ganglion cell (RGC) differentiation. Interacts with DLX2 (via homeobox DNA-binding domain); this interaction enhances RGC differentiation. Interacts (via C-terminus) with ISL1 (via C-terminus). Interacts with ISL2. Interacts with LHX2. In terms of tissue distribution, expressed in the brain. Expressed in the ganglion cell layer of the retina.

Its subcellular location is the nucleus. It localises to the nucleus speckle. The protein resides in the cytoplasm. Functionally, tissue-specific DNA-binding transcription factor involved in the development and differentiation of target cells. Functions either as activator or repressor modulating the rate of target gene transcription through RNA polymerase II enzyme in a promoter-dependent manner. Binds to the consensus octamer motif 5'-AT[A/T]A[T/A]T[A/T]A-3' of promoter of target genes. Plays a fundamental role in the gene regulatory network essential for retinal ganglion cell (RGC) differentiation. Binds to an octamer site to form a ternary complex with ISL1; cooperates positively with ISL1 and ISL2 to potentiate transcriptional activation of RGC target genes being involved in RGC fate commitment in the developing retina and RGC axon formation and pathfinding. Inhibits DLX1 and DLX2 transcriptional activities preventing DLX1- and DLX2-mediated ability to promote amacrine cell fate specification. In cooperation with TP53 potentiates transcriptional activation of BAX promoter activity increasing neuronal cell apoptosis. Negatively regulates BAX promoter activity in the absence of TP53. Acts as a transcriptional coactivator via its interaction with the transcription factor ESR1 by enhancing its effect on estrogen response element (ERE)-containing promoter. Antagonizes the transcriptional stimulatory activity of POU4F1 by preventing its binding to an octamer motif. Involved in TNFSF11-mediated terminal osteoclast differentiation. This Homo sapiens (Human) protein is POU domain, class 4, transcription factor 2.